A 90-amino-acid chain; its full sequence is Conotoxin Rg9.1 (90 aa).

A signal peptide spans 1-20 (MHLSLARSAVLILLLLFALG). A propeptide spanning residues 21-60 (NFVGVQPGQITRDADHGINLRSLRKQMSRSPLVKGAFCGQ) is cleaved from the precursor. Disulfide bonds link Cys-58-Cys-71, Cys-62-Cys-73, and Cys-67-Cys-80.

It belongs to the conotoxin P superfamily. In terms of tissue distribution, expressed by the venom duct.

It is found in the secreted. In terms of biological role, probable neurotoxin that inhibits ion channels. The polypeptide is Conotoxin Rg9.1 (Conus regius (Crown cone)).